We begin with the raw amino-acid sequence, 197 residues long: uncharacterized protein (197 aa).

4 helical membrane passes run 11–31, 85–105, 109–129, and 174–194; these read IALIVVGIIALFLPWLTISAS, STFMMIFGIIPIILYIASIFV, AVVVGAGIAGITCASIFVVLF, and VGTGWYLTMIIGLALIAYPFI.

Its subcellular location is the cell membrane. This is an uncharacterized protein from Methanocaldococcus jannaschii (strain ATCC 43067 / DSM 2661 / JAL-1 / JCM 10045 / NBRC 100440) (Methanococcus jannaschii).